Here is a 256-residue protein sequence, read N- to C-terminus: 3-hydroxy-5-phosphonooxypentane-2,4-dione thiolase (256 aa).

Lys-168 functions as the Schiff-base intermediate with substrate in the catalytic mechanism.

This sequence belongs to the DeoC/FbaB aldolase family. As to quaternary structure, homodecamer.

Its subcellular location is the cytoplasm. The enzyme catalyses dihydroxyacetone phosphate + acetyl-CoA = 3-hydroxy-2,4-dioxopentyl phosphate + CoA. In terms of biological role, involved in the degradation of phospho-AI-2, thereby terminating induction of the lsr operon and closing the AI-2 signaling cycle. Catalyzes the transfer of an acetyl moiety from 3-hydroxy-5-phosphonooxypentane-2,4-dione to CoA to form glycerone phosphate and acetyl-CoA. In Shigella flexneri serotype 5b (strain 8401), this protein is 3-hydroxy-5-phosphonooxypentane-2,4-dione thiolase (lsrF).